The following is a 356-amino-acid chain: tRNA N6-adenosine threonylcarbamoyltransferase (356 aa).

Positions 115 and 119 each coordinate Fe cation. Residues 138–142, Asp171, Gly184, and Asn283 contribute to the substrate site; that span reads LVSGG. Asp311 is a Fe cation binding site.

It belongs to the KAE1 / TsaD family. Fe(2+) serves as cofactor.

The protein localises to the cytoplasm. The enzyme catalyses L-threonylcarbamoyladenylate + adenosine(37) in tRNA = N(6)-L-threonylcarbamoyladenosine(37) in tRNA + AMP + H(+). Its function is as follows. Required for the formation of a threonylcarbamoyl group on adenosine at position 37 (t(6)A37) in tRNAs that read codons beginning with adenine. Is involved in the transfer of the threonylcarbamoyl moiety of threonylcarbamoyl-AMP (TC-AMP) to the N6 group of A37, together with TsaE and TsaB. TsaD likely plays a direct catalytic role in this reaction. The protein is tRNA N6-adenosine threonylcarbamoyltransferase of Prochlorococcus marinus (strain MIT 9312).